A 274-amino-acid chain; its full sequence is Urease accessory protein UreD 2 (274 aa).

It belongs to the UreD family. UreD, UreF and UreG form a complex that acts as a GTP-hydrolysis-dependent molecular chaperone, activating the urease apoprotein by helping to assemble the nickel containing metallocenter of UreC. The UreE protein probably delivers the nickel.

It localises to the cytoplasm. Functionally, required for maturation of urease via the functional incorporation of the urease nickel metallocenter. The protein is Urease accessory protein UreD 2 of Brucella anthropi (strain ATCC 49188 / DSM 6882 / CCUG 24695 / JCM 21032 / LMG 3331 / NBRC 15819 / NCTC 12168 / Alc 37) (Ochrobactrum anthropi).